Reading from the N-terminus, the 368-residue chain is UDP-N-acetylenolpyruvoylglucosamine reductase (368 aa).

Residues isoleucine 32–aspartate 199 enclose the FAD-binding PCMH-type domain. Arginine 177 is a catalytic residue. Serine 257 (proton donor) is an active-site residue. Glutamate 358 is an active-site residue.

Belongs to the MurB family. It depends on FAD as a cofactor.

The protein localises to the cytoplasm. It catalyses the reaction UDP-N-acetyl-alpha-D-muramate + NADP(+) = UDP-N-acetyl-3-O-(1-carboxyvinyl)-alpha-D-glucosamine + NADPH + H(+). The protein operates within cell wall biogenesis; peptidoglycan biosynthesis. Its function is as follows. Cell wall formation. This chain is UDP-N-acetylenolpyruvoylglucosamine reductase, found in Corynebacterium glutamicum (strain R).